Reading from the N-terminus, the 689-residue chain is Glycine--tRNA ligase beta subunit (689 aa).

The protein belongs to the class-II aminoacyl-tRNA synthetase family. Tetramer of two alpha and two beta subunits.

Its subcellular location is the cytoplasm. The enzyme catalyses tRNA(Gly) + glycine + ATP = glycyl-tRNA(Gly) + AMP + diphosphate. The protein is Glycine--tRNA ligase beta subunit of Salmonella paratyphi C (strain RKS4594).